The sequence spans 419 residues: Sphingomyelin phosphodiesterase 2 (419 aa).

Position 49 (E49) interacts with Mg(2+). H272 functions as the Proton acceptor in the catalytic mechanism. The next 2 membrane-spanning stretches (helical) occupy residues 326-346 (FSGYVIVWGLSLLVLLCVLAA) and 354-374 (AIILCIPSVGLVLVAGAVYLF).

This sequence belongs to the neutral sphingomyelinase family. It depends on Mg(2+) as a cofactor. As to expression, although widely expressed in all tissues examined, except the spleen, high enzymatic activity occurs only in the brain.

The protein resides in the cell membrane. The catalysed reaction is a sphingomyelin + H2O = phosphocholine + an N-acylsphing-4-enine + H(+). The enzyme catalyses an N-(acyl)-sphingosylphosphocholine + H2O = an N-acyl-sphingoid base + phosphocholine + H(+). It catalyses the reaction 1-O-octadecyl-sn-glycero-3-phosphocholine + H2O = 1-O-octadecyl-sn-glycerol + phosphocholine + H(+). It carries out the reaction 1-hexadecanoyl-sn-glycero-3-phosphocholine + H2O = 1-hexadecanoyl-sn-glycerol + phosphocholine + H(+). The catalysed reaction is a sphingosylphosphocholine + H2O = a sphingoid base + phosphocholine + H(+). The enzyme catalyses 1-O-hexadecyl-sn-glycero-3-phosphocholine + H2O = 1-O-hexadecyl-sn-glycerol + phosphocholine + H(+). Its pathway is lipid metabolism; sphingolipid metabolism. Its activity is regulated as follows. Activated by arachidonic acid. In terms of biological role, catalyzes, at least in vitro, the hydrolysis of sphingomyelin to form ceramide and phosphocholine. Also hydrolyzes 1-O-alkyl-2-lyso-sn-glycero-3-phosphocholine (lyso-platelet-activating factor) in vivo. Also acts on 1-acyl-2-lyso-sn-glycero-3-phosphocholine (lyso-PC) and sphingosylphosphocholine. The chain is Sphingomyelin phosphodiesterase 2 from Mus musculus (Mouse).